The following is a 325-amino-acid chain: Beta-ketoacyl-[acyl-carrier-protein] synthase III (325 aa).

Catalysis depends on residues C112 and H250. Residues 251-255 (QANIR) form an ACP-binding region. N280 is an active-site residue.

Belongs to the thiolase-like superfamily. FabH family. Homodimer.

The protein resides in the cytoplasm. It catalyses the reaction malonyl-[ACP] + acetyl-CoA + H(+) = 3-oxobutanoyl-[ACP] + CO2 + CoA. It participates in lipid metabolism; fatty acid biosynthesis. Catalyzes the condensation reaction of fatty acid synthesis by the addition to an acyl acceptor of two carbons from malonyl-ACP. Catalyzes the first condensation reaction which initiates fatty acid synthesis and may therefore play a role in governing the total rate of fatty acid production. Possesses both acetoacetyl-ACP synthase and acetyl transacylase activities. Its substrate specificity determines the biosynthesis of branched-chain and/or straight-chain of fatty acids. The protein is Beta-ketoacyl-[acyl-carrier-protein] synthase III of Clostridium acetobutylicum (strain ATCC 824 / DSM 792 / JCM 1419 / IAM 19013 / LMG 5710 / NBRC 13948 / NRRL B-527 / VKM B-1787 / 2291 / W).